The primary structure comprises 103 residues: Integration host factor subunit beta (103 aa).

It belongs to the bacterial histone-like protein family. Heterodimer of an alpha and a beta chain.

This protein is one of the two subunits of integration host factor, a specific DNA-binding protein that functions in genetic recombination as well as in transcriptional and translational control. The sequence is that of Integration host factor subunit beta from Rhizobium meliloti (strain 1021) (Ensifer meliloti).